The following is a 135-amino-acid chain: Large ribosomal subunit protein bL17 (135 aa).

The protein belongs to the bacterial ribosomal protein bL17 family. As to quaternary structure, part of the 50S ribosomal subunit. Contacts protein L32.

The sequence is that of Large ribosomal subunit protein bL17 from Listeria innocua serovar 6a (strain ATCC BAA-680 / CLIP 11262).